The following is an 89-amino-acid chain: Neurotoxin beta-KTx 52.1 (89 aa).

An N-terminal signal peptide occupies residues 1–20; it reads MKQYIFFLALIVLTATFAEA. Positions 21–39 are excised as a propeptide; it reads GKKTEILDKVKKVFSKAKD. Residues 53–89 form the BetaSPN-type CS-alpha/beta domain; sequence ELGCPFIDKWCEDHCDSKKLVGKCENFDCSCVKLGGK. Cystine bridges form between Cys-56–Cys-76, Cys-63–Cys-81, and Cys-67–Cys-83.

Belongs to the long chain scorpion toxin family. Class 2 subfamily. In terms of tissue distribution, expressed by the venom gland.

It localises to the secreted. Inhibits voltage-gated potassium channel. The chain is Neurotoxin beta-KTx 52.1 from Lychas mucronatus (Chinese swimming scorpion).